The following is a 183-amino-acid chain: Photosystem I assembly protein Ycf3 (183 aa).

TPR repeat units follow at residues 35–68 (AFIY…EIDS), 72–105 (SYIL…NSFL), and 120–153 (GEQA…SPDN).

The protein belongs to the Ycf3 family.

The protein resides in the plastid. Its subcellular location is the chloroplast thylakoid membrane. In terms of biological role, essential for the assembly of the photosystem I (PSI) complex. May act as a chaperone-like factor to guide the assembly of the PSI subunits. The chain is Photosystem I assembly protein Ycf3 from Adiantum capillus-veneris (Maidenhair fern).